Here is a 263-residue protein sequence, read N- to C-terminus: Acidic leucine-rich nuclear phosphoprotein 32 family member A (263 aa).

4 LRR repeats span residues 16-37 (QIQELNLDNCRSTSIVGLTDEY), 39-60 (ALESLSLINVGLTTLKGFPKLP), 61-83 (NLKKLELSDNRISSGLNYLTTSP), and 84-105 (KLQYLNLSGNKIKDLETLKPLE). Residues 118–156 (NDATQVDNYREKIFKMLPSLNFLDGFDCNDEEAQSEGDD) form the LRRCT domain. 2 stretches are compositionally biased toward acidic residues: residues 144 to 189 (DCND…DGDN) and 198 to 232 (YNDDLEEDNSDWEEGEGGGDDDEEDSDIDDADGEA). Positions 144–263 (DCNDEEAQSE…ARGKKRKHDG (120 aa)) are disordered. A compositionally biased stretch (basic and acidic residues) spans 242–254 (SKKEPEKTDESQA).

Belongs to the ANP32 family. In terms of processing, phosphorylated on serine residues.

It is found in the nucleus. Its subcellular location is the cytoplasm. In terms of biological role, implicated in a number of cellular processes, including proliferation, differentiation, caspase-dependent and caspase-independent apoptosis, suppression of transformation (tumor suppressor), inhibition of protein phosphatase 2A, regulation of mRNA trafficking and stability, and inhibition of acetyltransferases as part of the INHAT (inhibitor of histone acetyltransferases) complex. The sequence is that of Acidic leucine-rich nuclear phosphoprotein 32 family member A (Anp32a) from Drosophila pseudoobscura pseudoobscura (Fruit fly).